Consider the following 207-residue polypeptide: Large ribosomal subunit protein bL9 (207 aa).

Basic and acidic residues predominate over residues 162–176 (QKKEEKAKDEVSATE). Positions 162–207 (QKKEEKAKDEVSATEKDEELMLSSVTNDNDGDGAKEIVVEGTEESQ) are disordered.

This sequence belongs to the bacterial ribosomal protein bL9 family.

In terms of biological role, binds to the 23S rRNA. The chain is Large ribosomal subunit protein bL9 from Ehrlichia ruminantium (strain Gardel).